The chain runs to 90 residues: uncharacterized protein (90 aa).

An N-terminal signal peptide occupies residues 1-20 (MAYKMLQVVLCSTLLIGALG).

This is an uncharacterized protein from Homo sapiens (Human).